We begin with the raw amino-acid sequence, 417 residues long: RH-like protein IIF (417 aa).

Helical transmembrane passes span 12-32 (CLPLCALTLEAALILLFYFFT), 44-64 (LVASYQVGQDLTVMAAIGFGF), 77-97 (VAFNLFMLALGVQWAILLDGF), 125-145 (ISAGAVLGYVNLVQLVVMVLV), 172-192 (FYLFTAYFGVTVAWCLPKPLP), 203-223 (TIPSLSAMLGALFLWMFWPSF), 238-258 (VFNTYYALAVSVVTAISGSSL), 265-285 (ISMTYVHSAVLAGGVAVGTSC), 287-307 (LIPSPWLAMVLGLVAGLISIG), 331-351 (NFSLLGLLGEIIYIVLVVRHT), and 358-378 (MIGFQVLLSMGELSLAIAIAL).

The protein belongs to the ammonium transporter (TC 2.A.49) family. Rh subfamily.

Its subcellular location is the membrane. Functionally, may be part of an oligomeric complex which is likely to have a transport or channel function in the erythrocyte membrane. The chain is RH-like protein IIF from Pan troglodytes (Chimpanzee).